The chain runs to 147 residues: Peptide methionine sulfoxide reductase MsrB 2 (147 aa).

The MsrB domain occupies 6–129 (TDEEVSKLTP…NSAALRFIPR (124 aa)). Cys118 serves as the catalytic Nucleophile.

Belongs to the MsrB Met sulfoxide reductase family.

The catalysed reaction is L-methionyl-[protein] + [thioredoxin]-disulfide + H2O = L-methionyl-(R)-S-oxide-[protein] + [thioredoxin]-dithiol. This Rhizobium meliloti (strain 1021) (Ensifer meliloti) protein is Peptide methionine sulfoxide reductase MsrB 2 (msrB2).